Consider the following 395-residue polypeptide: Nuclear hormone receptor family member nhr-10 (395 aa).

A DNA-binding region (nuclear receptor) is located at residues 15 to 90; it reads EEVCLVCSDI…VGMDRNAIQQ (76 aa). 2 consecutive NR C4-type zinc fingers follow at residues 18–38 and 54–78; these read CLVCSDISTGYHYGVPSCNGC and CQFQGKCPVDKSIRCACRHCRFEKC. In terms of domain architecture, NR LBD spans 152–392; that stretch reads PSRTLIEAVV…TFAKQLLFGI (241 aa).

Belongs to the nuclear hormone receptor family.

Its subcellular location is the nucleus. In terms of biological role, probable transcription factor that acts in a feed-forward loop with nhr-68 to activate genes involved in the vitamin B12-independent breakdown of the short-chain fatty acid propionate. This pathway is triggered in response to a diet low in vitamin B12, when canonical vitamin B12-dependent propionate breakdown cannot function; the resulting accumulation of propionate is probably sensed by nhr-10 and/or nhr-68. The sequence is that of Nuclear hormone receptor family member nhr-10 (nhr-10) from Caenorhabditis elegans.